Here is a 502-residue protein sequence, read N- to C-terminus: Hippocampus abundant transcript-like protein 1 (502 aa).

Over residues 1-12 (MNAEPPEEKAAS) the composition is skewed to basic and acidic residues. The tract at residues 1 to 27 (MNAEPPEEKAASEAEAGAMPEKRAGSR) is disordered. Residues 1 to 46 (MNAEPPEEKAASEAEAGAMPEKRAGSRAAGGNSLQGFGRPSVYHAA) lie on the Extracellular side of the membrane. The helical transmembrane segment at 47–67 (IVIFLEFFAWGLLTTSMLTVL) threads the bilayer. The Cytoplasmic portion of the chain corresponds to 68–79 (HETFPQHTFLMN). A helical transmembrane segment spans residues 80-100 (GLIQGVKGLLSFLSAPLIGAL). Over 101-108 (SDVWGRKP) the chain is Extracellular. Residues 109–129 (FLLGTVFFTCFPIPLMRISPW) form a helical membrane-spanning segment. At 130 to 131 (WY) the chain is on the cytoplasmic side. A helical membrane pass occupies residues 132–152 (FAMISISGVFSVTFSVIFAYV). The Extracellular portion of the chain corresponds to 153–165 (ADVTQEHERSTAY). Residues 166–186 (GWVSATFAASLVSSPAIGAYL) form a helical membrane-spanning segment. Residues 187–193 (SASYGDS) are Cytoplasmic-facing. A helical membrane pass occupies residues 194-214 (LVVLVATVVALLDICFILLAV). Topologically, residues 215 to 248 (PESLPEKMRPLSWGARISWKQADPFASLKKVGKD) are extracellular. The chain crosses the membrane as a helical span at residues 249-269 (STILLICITVFLSYLPEAGQY). Residues 270-278 (SSFFLYLRQ) are Cytoplasmic-facing. A helical membrane pass occupies residues 279–299 (VIGFGSIKIAAFIAMVGILSI). Residues 300-316 (VAQTVFLTSLMRSLGNK) are Extracellular-facing. Residues 317-337 (NTVLLGLGFQMFQLAWYGFGS) form a helical membrane-spanning segment. Residue Gln-338 is a topological domain, cytoplasmic. The chain crosses the membrane as a helical span at residues 339 to 359 (AWMMWAAGIVAAVSSITFPAV). The Extracellular portion of the chain corresponds to 360–384 (STLVSQNADSNQQGVAQGIITGIRG). A helical membrane pass occupies residues 385-405 (LCNGLGPALYGFIFYMFHVEL). The Cytoplasmic segment spans residues 406 to 425 (TELEPELISNNAALQGAVIP). A helical membrane pass occupies residues 426-446 (GPPFLFGACIVFMSFLVAVFI). The Extracellular portion of the chain corresponds to 447–502 (PEYSKGGIQKHSNSISGSLANTPERGSDEDIEPLLQDSSIWELSSLEEPGHQCTEL).

This sequence belongs to the major facilitator superfamily.

It is found in the membrane. The chain is Hippocampus abundant transcript-like protein 1 from Bos taurus (Bovine).